The chain runs to 262 residues: Mlc titration factor A (262 aa).

Zn(2+)-binding residues include His111, His148, His152, and Glu211.

The protein belongs to the MtfA family. As to quaternary structure, interacts with Mlc. The cofactor is Zn(2+).

It localises to the cytoplasm. In terms of biological role, involved in the modulation of the activity of the glucose-phosphotransferase system (glucose-PTS). Interacts with the transcriptional repressor Mlc, preventing its interaction with DNA and leading to the modulation of expression of genes regulated by Mlc, including ptsG, which encodes the PTS system glucose-specific EIICB component. Shows zinc-dependent metallopeptidase activity. The chain is Mlc titration factor A from Serratia proteamaculans (strain 568).